A 104-amino-acid polypeptide reads, in one-letter code: Large ribosomal subunit protein bL21 (104 aa).

The protein belongs to the bacterial ribosomal protein bL21 family. Part of the 50S ribosomal subunit. Contacts protein L20.

In terms of biological role, this protein binds to 23S rRNA in the presence of protein L20. In Streptococcus equi subsp. equi (strain 4047), this protein is Large ribosomal subunit protein bL21.